The primary structure comprises 362 residues: MESPEVTFTLAYVVFSVCFVFTPNEFHSAGITVQNLLSGWLGSEDVAFVHYHIRRSTATLLTHSLLPMGYFIGMCFAAPEKELYNVYKAADGWKVFVLITVLLPVTTSILAFYWSQKRWGNHPLAKTLAHHALPQSSWRAVASSINTEFRRIDKFATGAPSARVIVTDTWVMKVTTYRVDVAQQQDIHLTVTDSRQHELSPDSNTPVQFITIRVASVNPRVKPFDIRLNSTEYGELREKLHAPIRNAANVVIHQTLSDMFLETFKSLVEANQVYELSSNQELEPCIGCMQTNANIKLVKYCQEANEGECQQCYCRPMWCLTCMGKWFASRQDQQHPETWLSSHVPCPTCRAKFCIVDVCIVR.

At 1-6 (MESPEV) the chain is on the lumenal side. Residues 7–27 (TFTLAYVVFSVCFVFTPNEFH) form a helical membrane-spanning segment. At 28–56 (SAGITVQNLLSGWLGSEDVAFVHYHIRRS) the chain is on the cytoplasmic side. Residues 57 to 77 (TATLLTHSLLPMGYFIGMCFA) traverse the membrane as a helical segment. The Lumenal portion of the chain corresponds to 78 to 94 (APEKELYNVYKAADGWK). The helical transmembrane segment at 95–115 (VFVLITVLLPVTTSILAFYWS) threads the bilayer. At 116–362 (QKRWGNHPLA…FCIVDVCIVR (247 aa)) the chain is on the cytoplasmic side. The segment at 285–350 (CIGCMQTNAN…SSHVPCPTCR (66 aa)) adopts an RING-type; degenerate zinc-finger fold.

The protein belongs to the TMEM129 family. As to quaternary structure, integral component of ER-resident dislocation complexes.

The protein resides in the endoplasmic reticulum membrane. It carries out the reaction S-ubiquitinyl-[E2 ubiquitin-conjugating enzyme]-L-cysteine + [acceptor protein]-L-lysine = [E2 ubiquitin-conjugating enzyme]-L-cysteine + N(6)-ubiquitinyl-[acceptor protein]-L-lysine.. The protein operates within protein modification; protein ubiquitination. Functionally, E3 ubiquitin-protein ligase involved in ER-associated protein degradation, preferentially associates with the E2 enzyme UBE2J2. The polypeptide is E3 ubiquitin-protein ligase TM129 (tmem129) (Xenopus tropicalis (Western clawed frog)).